A 448-amino-acid polypeptide reads, in one-letter code: Biotin carboxylase (448 aa).

The region spanning 1–445 (MLEKVVIANR…NIHYLEKKLG (445 aa)) is the Biotin carboxylation domain. Residues lysine 116, lysine 159, 165–166 (GG), 201–204 (EKYL), histidine 209, and histidine 236 each bind ATP. An ATP-grasp domain is found at 120-317 (IKAMKKAGVP…LVKEQLRIAA (198 aa)). Lysine 238 provides a ligand contact to hydrogencarbonate. Positions 276 and 288 each coordinate ATP. Glutamate 276, glutamate 288, and asparagine 290 together coordinate Mg(2+). Residues glutamate 276, glutamate 288, and asparagine 290 each contribute to the Mn(2+) site. Hydrogencarbonate is bound by residues arginine 292, valine 295, and arginine 338. Arginine 292 is a catalytic residue. Arginine 338 serves as a coordination point for biotin.

In terms of assembly, acetyl-CoA carboxylase is a heterohexamer of biotin carboxyl carrier protein, biotin carboxylase and the two subunits of carboxyl transferase in a 2:2 complex. Mg(2+) is required as a cofactor. The cofactor is Mn(2+).

It catalyses the reaction N(6)-biotinyl-L-lysyl-[protein] + hydrogencarbonate + ATP = N(6)-carboxybiotinyl-L-lysyl-[protein] + ADP + phosphate + H(+). It functions in the pathway lipid metabolism; malonyl-CoA biosynthesis; malonyl-CoA from acetyl-CoA: step 1/1. This protein is a component of the acetyl coenzyme A carboxylase complex; first, biotin carboxylase catalyzes the carboxylation of the carrier protein and then the transcarboxylase transfers the carboxyl group to form malonyl-CoA. In Haemophilus influenzae (strain ATCC 51907 / DSM 11121 / KW20 / Rd), this protein is Biotin carboxylase (accC).